A 265-amino-acid chain; its full sequence is Transcription factor Spi-B-like (265 aa).

The interval Met1–Pro31 is TAD1 (Acidic). Positions Ala42 to Phe63 are TAD2. The segment at Thr127–Asp160 is disordered. Residues Leu169–Gly252 constitute a DNA-binding region (ETS).

Belongs to the ETS family.

It localises to the nucleus. May act as a sequence specific transcriptional activator. The protein is Transcription factor Spi-B-like of Paleosuchus palpebrosus (Cuvier's smooth-fronted caiman).